The following is a 287-amino-acid chain: U1 small nuclear ribonucleoprotein A (287 aa).

The RRM 1 domain maps to 16–95 (HTIYINNLNE…KPMRIQYAKT (80 aa)). The residue at position 66 (K66) is an N6-acetyllysine. The interval 106 to 134 (TYVERDRKREKRKPKSQETPAAKKAVQGG) is disordered. Low complexity predominate over residues 125–134 (PAAKKAVQGG). R157 carries the post-translational modification Omega-N-methylarginine. In terms of domain architecture, RRM 2 spans 213–287 (HILFLTNLPE…NAMKISFAKK (75 aa)).

It belongs to the RRM U1 A/B'' family. U1 snRNP is composed of the 7 core Sm proteins SNRPB, SNRPD1, SNRPD2, SNRPD3, SNRPE, SNRPF and SNRPG that assemble in a heptameric protein ring on the Sm site of the small nuclear RNA to form the core snRNP, and at least three U1 snRNP-specific proteins SNRNP70/U1-70K, SNRPA/U1-A and SNRPC/U1-C. Interacts with SFPQ; component of a snRNP-free complex with SFPQ. Interacts with IVNS1ABP (via BACK domain); the interaction is indirect.

It localises to the nucleus. In terms of biological role, component of the spliceosomal U1 snRNP, which is essential for recognition of the pre-mRNA 5' splice-site and the subsequent assembly of the spliceosome. U1 snRNP is the first snRNP to interact with pre-mRNA. This interaction is required for the subsequent binding of U2 snRNP and the U4/U6/U5 tri-snRNP. SNRPA binds stem loop II of U1 snRNA. In a snRNP-free form (SF-A) may be involved in coupled pre-mRNA splicing and polyadenylation process. May bind preferentially to the 5'-UGCAC-3' motif on RNAs. This is U1 small nuclear ribonucleoprotein A (Snrpa) from Mus musculus (Mouse).